A 127-amino-acid chain; its full sequence is Large ribosomal subunit protein bL12 (127 aa).

It belongs to the bacterial ribosomal protein bL12 family. Homodimer. Part of the ribosomal stalk of the 50S ribosomal subunit. Forms a multimeric L10(L12)X complex, where L10 forms an elongated spine to which 2 to 4 L12 dimers bind in a sequential fashion. Binds GTP-bound translation factors.

In terms of biological role, forms part of the ribosomal stalk which helps the ribosome interact with GTP-bound translation factors. Is thus essential for accurate translation. The sequence is that of Large ribosomal subunit protein bL12 from Leptospira interrogans serogroup Icterohaemorrhagiae serovar copenhageni (strain Fiocruz L1-130).